Reading from the N-terminus, the 124-residue chain is MAAAMTFCRLLNRCGEAARSLPLGARCFGVRVSPTGEKVTHTGQVYDDKDYRRIRFVGRQKEVNENFAIDLIAEQPVSEVETRVIACDGGGGALGHPKVYINLDKETKTGTCGYCGLQFRQHHR.

The transit peptide at 1 to 28 (MAAAMTFCRLLNRCGEAARSLPLGARCF) directs the protein to the mitochondrion. K98 carries the post-translational modification N6-acetyllysine.

This sequence belongs to the complex I NDUFS6 subunit family. Mammalian complex I is composed of 45 different subunits. This is a component of the iron-sulfur (IP) fragment of the enzyme.

It is found in the mitochondrion inner membrane. In terms of biological role, accessory subunit of the mitochondrial membrane respiratory chain NADH dehydrogenase (Complex I), that is believed not to be involved in catalysis. Complex I functions in the transfer of electrons from NADH to the respiratory chain. The immediate electron acceptor for the enzyme is believed to be ubiquinone. This Gorilla gorilla gorilla (Western lowland gorilla) protein is NADH dehydrogenase [ubiquinone] iron-sulfur protein 6, mitochondrial (NDUFS6).